The primary structure comprises 305 residues: tRNA uridine(34) hydroxylase (305 aa).

One can recognise a Rhodanese domain in the interval 130–228 (DDPDTLVIDT…YLGEIPEQES (99 aa)). Catalysis depends on C188, which acts as the Cysteine persulfide intermediate.

This sequence belongs to the TrhO family.

The enzyme catalyses uridine(34) in tRNA + AH2 + O2 = 5-hydroxyuridine(34) in tRNA + A + H2O. Its function is as follows. Catalyzes oxygen-dependent 5-hydroxyuridine (ho5U) modification at position 34 in tRNAs. This chain is tRNA uridine(34) hydroxylase, found in Synechococcus sp. (strain CC9902).